The sequence spans 362 residues: Phosphoserine aminotransferase (362 aa).

Residue Arg42 coordinates L-glutamate. Pyridoxal 5'-phosphate is bound by residues Ala76 to Ser77, Trp102, Thr152, Asp173, and Gln196. Lys197 is modified (N6-(pyridoxal phosphate)lysine). Residue Asn238–Thr239 coordinates pyridoxal 5'-phosphate.

Belongs to the class-V pyridoxal-phosphate-dependent aminotransferase family. SerC subfamily. Homodimer. It depends on pyridoxal 5'-phosphate as a cofactor.

The protein localises to the cytoplasm. It carries out the reaction O-phospho-L-serine + 2-oxoglutarate = 3-phosphooxypyruvate + L-glutamate. The catalysed reaction is 4-(phosphooxy)-L-threonine + 2-oxoglutarate = (R)-3-hydroxy-2-oxo-4-phosphooxybutanoate + L-glutamate. The protein operates within amino-acid biosynthesis; L-serine biosynthesis; L-serine from 3-phospho-D-glycerate: step 2/3. Its pathway is cofactor biosynthesis; pyridoxine 5'-phosphate biosynthesis; pyridoxine 5'-phosphate from D-erythrose 4-phosphate: step 3/5. Catalyzes the reversible conversion of 3-phosphohydroxypyruvate to phosphoserine and of 3-hydroxy-2-oxo-4-phosphonooxybutanoate to phosphohydroxythreonine. This is Phosphoserine aminotransferase from Chromobacterium violaceum (strain ATCC 12472 / DSM 30191 / JCM 1249 / CCUG 213 / NBRC 12614 / NCIMB 9131 / NCTC 9757 / MK).